The following is a 276-amino-acid chain: Large ribosomal subunit protein uL2 (276 aa).

Disordered regions lie at residues 30–52 (VKGL…TTSR) and 224–257 (VMNP…KGYK). Residues 41-52 (GGRNNHGRTTSR) show a composition bias toward polar residues.

It belongs to the universal ribosomal protein uL2 family. Part of the 50S ribosomal subunit. Forms a bridge to the 30S subunit in the 70S ribosome.

Its function is as follows. One of the primary rRNA binding proteins. Required for association of the 30S and 50S subunits to form the 70S ribosome, for tRNA binding and peptide bond formation. It has been suggested to have peptidyltransferase activity; this is somewhat controversial. Makes several contacts with the 16S rRNA in the 70S ribosome. The chain is Large ribosomal subunit protein uL2 from Gluconacetobacter diazotrophicus (strain ATCC 49037 / DSM 5601 / CCUG 37298 / CIP 103539 / LMG 7603 / PAl5).